A 269-amino-acid chain; its full sequence is Voltage-gated hydrogen channel 1 (269 aa).

Over 1–96 the chain is Cytoplasmic; sequence MTSHDPKAVT…RLRKLFSSHR (96 aa). The residue at position 29 (T29) is a Phosphothreonine. A disordered region spans residues 46–79; that stretch reads ENEEEEEEPAPTSAEGEGNAEGPDAEAGSASTPR. A Phosphoserine modification is found at S93. The chain crosses the membrane as a helical span at residues 97–117; sequence FQVIIICLVVLDALLVLAELL. Topologically, residues 118-134 are extracellular; the sequence is LDLKIIEPDEQDYAVTA. The chain crosses the membrane as a helical span at residues 135-157; it reads FHYMSFAILVFFMLEIFFKIFVF. The Cytoplasmic segment spans residues 158 to 165; it reads RLEFFHHK. A helical membrane pass occupies residues 166–186; it reads FEILDAFVVVVSFVLDLVLLF. Residues 187 to 193 lie on the Extracellular side of the membrane; sequence KSHHFEA. The chain crosses the membrane as a helical span at residues 194–214; that stretch reads LGLLILLRLWRVARIINGIII. Topologically, residues 215-269 are cytoplasmic; it reads SVKTRSERQILRLKQINIQLATKIQHLEFSCSEKEQEIERLNKLLKQNGLLGDVN. The stretch at 221–261 forms a coiled coil; the sequence is ERQILRLKQINIQLATKIQHLEFSCSEKEQEIERLNKLLKQ.

Belongs to the voltage-gated proton channel (VPC) (TC 1.A.51) family. In terms of assembly, homodimer; each protomer forms its own proton conduction pathway. Post-translationally, phosphorylated in vitro by PRKCD. Phosphorylation may enhance channel gating. As to expression, enriched in immune tissues, such as bone marrow, macrophages and spleen.

It localises to the cell membrane. The protein localises to the apical cell membrane. The protein resides in the cytoplasmic vesicle. Its subcellular location is the phagosome membrane. It is found in the cell projection. It localises to the cilium. The protein localises to the flagellum membrane. The enzyme catalyses H(+)(in) = H(+)(out). With respect to regulation, the dimers display cooperative channel gating. The channel activity is inhibited by zinc ions. Its function is as follows. Voltage-gated proton-selective channel that conducts outward proton currents in response to intracellular acidification. Lacks a canonical ion-channel pore domain and mediates proton permeability via its voltage sensor domain. Provides for proton efflux that compensates for electron charge generated by NADPH oxidase activity either in the extracellular or phagosomal compartments, thus enabling the production of high levels of bactericidal reactive oxygen species during the respiratory burst. Opens when the pH of airway surface liquid exceeds 7 and contributes to respiratory epithelial acid secretion to maintain pH in the mucosa. This Mus musculus (Mouse) protein is Voltage-gated hydrogen channel 1.